A 748-amino-acid polypeptide reads, in one-letter code: Cytosolic phospholipase A2 (748 aa).

Residues 1–178 are phospholipid binding; that stretch reads MSFIDPYQHI…MKSFLGEENS (178 aa). Residues 6-124 enclose the C2 domain; the sequence is PYQHIVVEHQ…GEKKEVQLTF (119 aa). D40, T41, D43, N65, D93, A94, and N95 together coordinate Ca(2+). The PLA2c domain occupies 138–740; sequence VCSSTDLRFS…SSVEARRFFN (603 aa). S228 serves as the catalytic Nucleophile. The segment at 431–459 is disordered; sequence SNDSSDSEDESQHPKGTENSEANEEYQNS. Over residues 449-459 the composition is skewed to polar residues; sequence NSEANEEYQNS. The residue at position 505 (S505) is a Phosphoserine; by MAPK. The active-site Proton acceptor is D549.

In terms of processing, activated by phosphorylation on a serine residue.

It is found in the cytoplasm. Its subcellular location is the cytoplasmic vesicle. The enzyme catalyses a 1,2-diacyl-sn-glycero-3-phosphocholine + H2O = a 1-acyl-sn-glycero-3-phosphocholine + a fatty acid + H(+). It catalyses the reaction a 1-acyl-sn-glycero-3-phosphocholine + H2O = sn-glycerol 3-phosphocholine + a fatty acid + H(+). Stimulated by agonists such as ATP, EGF, thrombin and bradykinin as well as by cytosolic Ca(2+). Selectively hydrolyzes arachidonyl phospholipids in the sn-2 position releasing arachidonic acid. Together with its lysophospholipid activity, it is implicated in the initiation of the inflammatory response. The sequence is that of Cytosolic phospholipase A2 (PLA2G4A) from Gallus gallus (Chicken).